Reading from the N-terminus, the 341-residue chain is MKALSKLKAEEGIWMTDVPVPELGHNDLLIKIRKTAICGTDVHIYNWDEWSQKTIPVPMVVGHEYVGEVVGIGQEVKGFKIGDRVSGEGHITCGHCRNCRGGRTHLCRNTIGVGVNRPGCFAEYLVIPAFNAFKIPDNISDDLASIFDPFGNAVHTALSFDLVGEDVLVSGAGPIGIMAAAVAKHVGARNVVITDVNEYRLELARKMGVTRAVNVAKENLNDVMAELGMTEGFDVGLEMSGAPPAFRTMLDTMNHGGRIAMLGIPPSDMSIDWTKVIFKGLFIKGIYGREMFETWYKMAALIQSGLDLSPIITHRFSIDDFQKGFDAMRSGQSGKVILSWD.

Residue Cys-38 participates in Zn(2+) binding. Catalysis depends on charge relay system residues Thr-40 and His-43. Zn(2+) is bound by residues His-63, Glu-64, Cys-93, Cys-96, Cys-99, and Cys-107. NAD(+)-binding positions include Ile-175, Asp-195, Arg-200, 262–264 (LGI), and 286–287 (IY).

This sequence belongs to the zinc-containing alcohol dehydrogenase family. Homotetramer. Requires Zn(2+) as cofactor.

Its subcellular location is the cytoplasm. It catalyses the reaction L-threonine + NAD(+) = (2S)-2-amino-3-oxobutanoate + NADH + H(+). It functions in the pathway amino-acid degradation; L-threonine degradation via oxydo-reductase pathway; glycine from L-threonine: step 1/2. Catalyzes the NAD(+)-dependent oxidation of L-threonine to 2-amino-3-ketobutyrate. This Escherichia coli O17:K52:H18 (strain UMN026 / ExPEC) protein is L-threonine 3-dehydrogenase.